The chain runs to 568 residues: Proline--tRNA ligase (568 aa).

Belongs to the class-II aminoacyl-tRNA synthetase family. ProS type 1 subfamily. As to quaternary structure, homodimer.

Its subcellular location is the cytoplasm. The catalysed reaction is tRNA(Pro) + L-proline + ATP = L-prolyl-tRNA(Pro) + AMP + diphosphate. Functionally, catalyzes the attachment of proline to tRNA(Pro) in a two-step reaction: proline is first activated by ATP to form Pro-AMP and then transferred to the acceptor end of tRNA(Pro). As ProRS can inadvertently accommodate and process non-cognate amino acids such as alanine and cysteine, to avoid such errors it has two additional distinct editing activities against alanine. One activity is designated as 'pretransfer' editing and involves the tRNA(Pro)-independent hydrolysis of activated Ala-AMP. The other activity is designated 'posttransfer' editing and involves deacylation of mischarged Ala-tRNA(Pro). The misacylated Cys-tRNA(Pro) is not edited by ProRS. This chain is Proline--tRNA ligase, found in Listeria innocua serovar 6a (strain ATCC BAA-680 / CLIP 11262).